The primary structure comprises 362 residues: Probable secreted beta-glucosidase UTH1 (362 aa).

The signal sequence occupies residues 1 to 17; it reads MKLSALLALSASTAVLA.

The protein belongs to the SUN family.

Its subcellular location is the mitochondrion outer membrane. It localises to the secreted. The protein resides in the cell wall. In terms of biological role, involved in aging, oxidative stress response, and in the regulation of mitochondrial biogenesis. Inactivation of UTH1 increases life span, leads to higher resistance to heat stress and to hydrogen peroxide, and increases sensitivity to the superoxide radical-generating drug paraquat and to copper. Also required for the selective autophagic degradation of mitochondria (mitophagy) in response to nitrogen starvation. May play a role in cell wall morphogenesis and septation. Involved in the remodeling of the cell wall during the various phases of yeast culture development and under various environmental conditions and plays a role in septation. Involved in cell sensitivity to boric acid. This chain is Probable secreted beta-glucosidase UTH1 (UTH1), found in Saccharomyces cerevisiae (strain YJM789) (Baker's yeast).